The chain runs to 153 residues: SsrA-binding protein (153 aa).

Residues 133-143 show a composition bias toward basic and acidic residues; it reads ADLKERDDKRQ. The tract at residues 133-153 is disordered; that stretch reads ADLKERDDKRQMQQALKQQQY. The segment covering 144–153 has biased composition (low complexity); that stretch reads MQQALKQQQY.

This sequence belongs to the SmpB family.

The protein localises to the cytoplasm. Its function is as follows. Required for rescue of stalled ribosomes mediated by trans-translation. Binds to transfer-messenger RNA (tmRNA), required for stable association of tmRNA with ribosomes. tmRNA and SmpB together mimic tRNA shape, replacing the anticodon stem-loop with SmpB. tmRNA is encoded by the ssrA gene; the 2 termini fold to resemble tRNA(Ala) and it encodes a 'tag peptide', a short internal open reading frame. During trans-translation Ala-aminoacylated tmRNA acts like a tRNA, entering the A-site of stalled ribosomes, displacing the stalled mRNA. The ribosome then switches to translate the ORF on the tmRNA; the nascent peptide is terminated with the 'tag peptide' encoded by the tmRNA and targeted for degradation. The ribosome is freed to recommence translation, which seems to be the essential function of trans-translation. This chain is SsrA-binding protein, found in Protochlamydia amoebophila (strain UWE25).